The chain runs to 69 residues: uncharacterized protein (69 aa).

This is an uncharacterized protein from Bacillus anthracis.